Reading from the N-terminus, the 1502-residue chain is G patch domain-containing protein 8 (1502 aa).

One can recognise a G-patch domain in the interval 40–86 (SDNIGHRLLQKHGWKLGQGLGKSLQGRTDPIPIVVKYDVMGMGRMEM). Positions 89–124 (DYAEDATERRRVLEVEKEDTEELRQKYKDYVDKEKA) form a coiled coil. The C2H2-type zinc-finger motif lies at 136 to 160 (FYCELCDKQYQKHQEFDNHINSYDH). The interval 172–251 (REFARNVSSR…GATASCGLGS (80 aa)) is disordered. Basic and acidic residues predominate over residues 182–206 (SRKDEKKQEKALRRLHELAEQRKQA). Over residues 223 to 233 (VDEEGGEDDKD) the composition is skewed to acidic residues. Residue K311 forms a Glycyl lysine isopeptide (Lys-Gly) (interchain with G-Cter in SUMO2) linkage. Composition is skewed to basic and acidic residues over residues 323–339 (AEEG…EKSS) and 424–436 (NTTH…ESKK). Disordered stretches follow at residues 323–391 (AEEG…ATEP) and 419–541 (QMDG…FPVL). Residues 459-472 (SEVSEQPKETSMTE) are compositionally biased toward polar residues. The residue at position 479 (K479) is an N6-acetyllysine. S491 bears the Phosphoserine mark. Positions 491-519 (SDQSLESHSQKVSETQMCESNSSKETSLA) are enriched in polar residues. A Glycyl lysine isopeptide (Lys-Gly) (interchain with G-Cter in SUMO2) cross-link involves residue K577. Basic and acidic residues-rich tracts occupy residues 579–623 (SRNK…EKIV) and 653–670 (SETE…ERSG). Residues 579–1301 (SRNKDARTKG…ESTDGAEDAS (723 aa)) are disordered. Residue S653 is modified to Phosphoserine. Residues 671–692 (KSHRHKKKKKHKKSSKHKRKHK) show a composition bias toward basic residues. Over residues 693-707 (ADTEEKSSKAESGEK) the composition is skewed to basic and acidic residues. The segment covering 708 to 720 (SKKRKKRKRKKNK) has biased composition (basic residues). Over residues 733–743 (PEPPGSGSPAP) the composition is skewed to pro residues. A phosphoserine mark is found at S738, S740, and S758. Residues 750–772 (AQDDSQRRSLPAEEGSSGKKDEG) are compositionally biased toward basic and acidic residues. Composition is skewed to basic residues over residues 799–809 (AGTKRSSRSSH) and 852–867 (SRSR…RSSR). The span at 868–896 (RSYSSSSDASSDQSCYSRQRSYSDDSYSD) shows a compositional bias: low complexity. Residues S911 and S914 each carry the phosphoserine modification. A compositionally biased stretch (basic residues) spans 919–928 (SKHRSKRHKY). S981, S1009, S1014, S1033, and S1035 each carry phosphoserine. A compositionally biased stretch (basic and acidic residues) spans 1010–1027 (WGHESPEERHSGRRDFIR). Residues 1042–1059 (GRGEGPGKKDDGRGDDSK) are compositionally biased toward basic and acidic residues. S1081 is modified (phosphoserine). Basic and acidic residues-rich tracts occupy residues 1093–1108 (LLEK…KPSV) and 1159–1171 (KKCE…RGEE). Residue K1105 forms a Glycyl lysine isopeptide (Lys-Gly) (interchain with G-Cter in SUMO2) linkage. At S1107 the chain carries Phosphoserine. Phosphoserine is present on S1175.

This chain is G patch domain-containing protein 8 (GPATCH8), found in Homo sapiens (Human).